The following is a 196-amino-acid chain: Xanthine phosphoribosyltransferase (196 aa).

Xanthine is bound by residues Leu-26 and Asn-33. 5-phospho-alpha-D-ribose 1-diphosphate is bound at residue 134–138; the sequence is ASGEA. Lys-162 provides a ligand contact to xanthine.

This sequence belongs to the purine/pyrimidine phosphoribosyltransferase family. Xpt subfamily. As to quaternary structure, homodimer.

Its subcellular location is the cytoplasm. The catalysed reaction is XMP + diphosphate = xanthine + 5-phospho-alpha-D-ribose 1-diphosphate. It functions in the pathway purine metabolism; XMP biosynthesis via salvage pathway; XMP from xanthine: step 1/1. Functionally, converts the preformed base xanthine, a product of nucleic acid breakdown, to xanthosine 5'-monophosphate (XMP), so it can be reused for RNA or DNA synthesis. The polypeptide is Xanthine phosphoribosyltransferase (Moorella thermoacetica (strain ATCC 39073 / JCM 9320)).